The chain runs to 294 residues: Indole-3-glycerol phosphate synthase (294 aa).

The protein belongs to the TrpC family.

It carries out the reaction 1-(2-carboxyphenylamino)-1-deoxy-D-ribulose 5-phosphate + H(+) = (1S,2R)-1-C-(indol-3-yl)glycerol 3-phosphate + CO2 + H2O. It functions in the pathway amino-acid biosynthesis; L-tryptophan biosynthesis; L-tryptophan from chorismate: step 4/5. The polypeptide is Indole-3-glycerol phosphate synthase (Crocosphaera subtropica (strain ATCC 51142 / BH68) (Cyanothece sp. (strain ATCC 51142))).